The sequence spans 234 residues: Filarial antigen Av33 (234 aa).

The first 17 residues, 1–17 (MKILSCLLLCTITVLEG), serve as a signal peptide directing secretion. An intrachain disulfide couples cysteine 135 to cysteine 230. The tract at residues 204-234 (TSQASEATTIPTTTQTPVEAPETPSFCVPIY) is disordered. A compositionally biased stretch (low complexity) spans 211 to 220 (TTIPTTTQTP).

The protein belongs to the protease inhibitor I33 family.

The protein localises to the secreted. Its function is as follows. Aspartyl protease inhibitor. In Acanthocheilonema viteae (Filarial nematode worm), this protein is Filarial antigen Av33.